A 249-amino-acid chain; its full sequence is GTP cyclohydrolase 1 type 2 homolog (249 aa).

A divalent metal cation-binding residues include H64, H65, D102, H217, and E221.

The protein belongs to the GTP cyclohydrolase I type 2/NIF3 family. As to quaternary structure, homohexamer.

The sequence is that of GTP cyclohydrolase 1 type 2 homolog from Neisseria meningitidis serogroup A / serotype 4A (strain DSM 15465 / Z2491).